A 461-amino-acid polypeptide reads, in one-letter code: Deoxyguanosinetriphosphate triphosphohydrolase-like protein (461 aa).

A disordered region spans residues 22 to 41 (ERFLPDPPREKDNRPPFRRD). Positions 24–41 (FLPDPPREKDNRPPFRRD) are enriched in basic and acidic residues. The 214-residue stretch at 72–285 (RLTHSLEVAQ…MELADDIAYG (214 aa)) folds into the HD domain.

It belongs to the dGTPase family. Type 2 subfamily.

In Haemophilus influenzae (strain PittGG), this protein is Deoxyguanosinetriphosphate triphosphohydrolase-like protein.